Here is a 424-residue protein sequence, read N- to C-terminus: UPF0229 protein YPTS_2141 (424 aa).

Residues 84-109 (TNDRVDRPQGGGGGGSGQGNAGKDGE) form a disordered region. Residues 92–105 (QGGGGGGSGQGNAG) are compositionally biased toward gly residues.

It belongs to the UPF0229 family.

The chain is UPF0229 protein YPTS_2141 from Yersinia pseudotuberculosis serotype IB (strain PB1/+).